A 209-amino-acid polypeptide reads, in one-letter code: Holliday junction branch migration complex subunit RuvA (209 aa).

The segment at 1–64 (MIGRIRGMLI…EDAQSLYGFA (64 aa)) is domain I. The tract at residues 65–143 (SRLDRNLFRL…QLEGQFVPSQ (79 aa)) is domain II. The segment at 144–157 (PDVPTGAGAATASQ) is flexible linker. The domain III stretch occupies residues 158–209 (AGPDPREEAEAALIALGYKPQEAAKAISKVAGPDMNSETLIRLALKNMIPAG).

The protein belongs to the RuvA family. Homotetramer. Forms an RuvA(8)-RuvB(12)-Holliday junction (HJ) complex. HJ DNA is sandwiched between 2 RuvA tetramers; dsDNA enters through RuvA and exits via RuvB. An RuvB hexamer assembles on each DNA strand where it exits the tetramer. Each RuvB hexamer is contacted by two RuvA subunits (via domain III) on 2 adjacent RuvB subunits; this complex drives branch migration. In the full resolvosome a probable DNA-RuvA(4)-RuvB(12)-RuvC(2) complex forms which resolves the HJ.

Its subcellular location is the cytoplasm. Functionally, the RuvA-RuvB-RuvC complex processes Holliday junction (HJ) DNA during genetic recombination and DNA repair, while the RuvA-RuvB complex plays an important role in the rescue of blocked DNA replication forks via replication fork reversal (RFR). RuvA specifically binds to HJ cruciform DNA, conferring on it an open structure. The RuvB hexamer acts as an ATP-dependent pump, pulling dsDNA into and through the RuvAB complex. HJ branch migration allows RuvC to scan DNA until it finds its consensus sequence, where it cleaves and resolves the cruciform DNA. The sequence is that of Holliday junction branch migration complex subunit RuvA from Marinobacter nauticus (strain ATCC 700491 / DSM 11845 / VT8) (Marinobacter aquaeolei).